The primary structure comprises 166 residues: 3-isopropylmalate dehydratase small subunit (166 aa).

It belongs to the LeuD family. LeuD type 2 subfamily. In terms of assembly, heterodimer of LeuC and LeuD.

It catalyses the reaction (2R,3S)-3-isopropylmalate = (2S)-2-isopropylmalate. Its pathway is amino-acid biosynthesis; L-leucine biosynthesis; L-leucine from 3-methyl-2-oxobutanoate: step 2/4. Functionally, catalyzes the isomerization between 2-isopropylmalate and 3-isopropylmalate, via the formation of 2-isopropylmaleate. The sequence is that of 3-isopropylmalate dehydratase small subunit from Caldicellulosiruptor bescii (strain ATCC BAA-1888 / DSM 6725 / KCTC 15123 / Z-1320) (Anaerocellum thermophilum).